The primary structure comprises 115 residues: V-type proton ATPase subunit G (115 aa).

It belongs to the V-ATPase G subunit family. As to quaternary structure, V-ATPase is a heteromultimeric enzyme composed of a peripheral catalytic V1 complex (components A to H) attached to an integral membrane V0 proton pore complex (components: a, c, c', c'', d, e, f and VOA1).

The protein localises to the vacuole membrane. Its function is as follows. Subunit of the V1 complex of vacuolar(H+)-ATPase (V-ATPase), a multisubunit enzyme composed of a peripheral complex (V1) that hydrolyzes ATP and a membrane integral complex (V0) that translocates protons. V-ATPase is responsible for acidifying and maintaining the pH of intracellular compartments. In Neurospora crassa (strain ATCC 24698 / 74-OR23-1A / CBS 708.71 / DSM 1257 / FGSC 987), this protein is V-type proton ATPase subunit G (vma-10).